Reading from the N-terminus, the 430-residue chain is Serine--tRNA ligase (430 aa).

237–239 (TAE) is a binding site for L-serine. 268 to 270 (RSE) contributes to the ATP binding site. Glutamate 291 is a binding site for L-serine. An ATP-binding site is contributed by 355 to 358 (EISS). Serine 391 provides a ligand contact to L-serine.

Belongs to the class-II aminoacyl-tRNA synthetase family. Type-1 seryl-tRNA synthetase subfamily. In terms of assembly, homodimer. The tRNA molecule binds across the dimer.

It localises to the cytoplasm. The enzyme catalyses tRNA(Ser) + L-serine + ATP = L-seryl-tRNA(Ser) + AMP + diphosphate + H(+). The catalysed reaction is tRNA(Sec) + L-serine + ATP = L-seryl-tRNA(Sec) + AMP + diphosphate + H(+). It functions in the pathway aminoacyl-tRNA biosynthesis; selenocysteinyl-tRNA(Sec) biosynthesis; L-seryl-tRNA(Sec) from L-serine and tRNA(Sec): step 1/1. Its function is as follows. Catalyzes the attachment of serine to tRNA(Ser). Is also able to aminoacylate tRNA(Sec) with serine, to form the misacylated tRNA L-seryl-tRNA(Sec), which will be further converted into selenocysteinyl-tRNA(Sec). This chain is Serine--tRNA ligase, found in Enterobacter sp. (strain 638).